The sequence spans 114 residues: Iron-sulfur cluster insertion protein ErpA (114 aa).

Cysteine 42, cysteine 106, and cysteine 108 together coordinate iron-sulfur cluster.

Belongs to the HesB/IscA family. As to quaternary structure, homodimer. The cofactor is iron-sulfur cluster.

Its function is as follows. Required for insertion of 4Fe-4S clusters for at least IspG. The protein is Iron-sulfur cluster insertion protein ErpA of Buchnera aphidicola subsp. Acyrthosiphon pisum (strain 5A).